The chain runs to 917 residues: Translation initiation factor IF-2 (917 aa).

The segment at 241 to 312 (EEAKKGTLHK…GGWRSGGGRK (72 aa)) is disordered. Positions 252 to 262 (AKAEGAEDKKK) are enriched in basic and acidic residues. The segment covering 274 to 283 (SSETSSTWQE) has biased composition (polar residues). The span at 298-308 (TSGGVGGWRSG) shows a compositional bias: gly residues. The region spanning 415 to 582 (PRPPVVTVMG…NVLLQAEILE (168 aa)) is the tr-type G domain. Positions 424–431 (GHVDHGKT) are G1. 424–431 (GHVDHGKT) provides a ligand contact to GTP. A G2 region spans residues 449 to 453 (GITQH). Residues 470–473 (DTPG) form a G3 region. GTP-binding positions include 470 to 474 (DTPGH) and 524 to 527 (NKID). Residues 524–527 (NKID) form a G4 region. The segment at 560 to 562 (SAK) is G5.

Belongs to the TRAFAC class translation factor GTPase superfamily. Classic translation factor GTPase family. IF-2 subfamily.

The protein resides in the cytoplasm. Its function is as follows. One of the essential components for the initiation of protein synthesis. Protects formylmethionyl-tRNA from spontaneous hydrolysis and promotes its binding to the 30S ribosomal subunits. Also involved in the hydrolysis of GTP during the formation of the 70S ribosomal complex. This chain is Translation initiation factor IF-2, found in Polynucleobacter necessarius subsp. necessarius (strain STIR1).